We begin with the raw amino-acid sequence, 536 residues long: 1,4-beta-D-glucan cellobiohydrolase B (536 aa).

The signal sequence occupies residues 1 to 21 (MSSFQIYRAALLLSILATANA). Residues 22–458 (QQVGTYTTET…SNIKFGPIGS (437 aa)) form a catalytic region. Glu233 (nucleophile) is an active-site residue. The active-site Proton donor is Glu238. N-linked (GlcNAc...) asparagine glycans are attached at residues Asn351 and Asn414. The interval 459–500 (TYSSGSSSGSGSSSSSSSTTTKATSTTLKTTSTTSSGSSSTS) is ser/Thr-rich linker. Positions 464–499 (SSSGSGSSSSSSSTTTKATSTTLKTTSTTSSGSSST) are disordered. In terms of domain architecture, CBM1 spans 500 to 536 (SAAQAYGQCGGQGWTGPTTCVSGYTCTYENAYYSQCL). Intrachain disulfides connect Cys508/Cys525 and Cys519/Cys535.

This sequence belongs to the glycosyl hydrolase 7 (cellulase C) family.

The protein resides in the secreted. It carries out the reaction Hydrolysis of (1-&gt;4)-beta-D-glucosidic linkages in cellulose and cellotetraose, releasing cellobiose from the non-reducing ends of the chains.. In terms of biological role, the biological conversion of cellulose to glucose generally requires three types of hydrolytic enzymes: (1) Endoglucanases which cut internal beta-1,4-glucosidic bonds; (2) Exocellobiohydrolases that cut the disaccharide cellobiose from the non-reducing end of the cellulose polymer chain; (3) Beta-1,4-glucosidases which hydrolyze the cellobiose and other short cello-oligosaccharides to glucose. This Aspergillus niger protein is 1,4-beta-D-glucan cellobiohydrolase B (cbhB).